The sequence spans 337 residues: Glyceraldehyde-3-phosphate dehydrogenase (337 aa).

Residues 11–12 (TI) and Gly-110 each bind NAD(+). 139 to 141 (SCN) contributes to the D-glyceraldehyde 3-phosphate binding site. Cys-140 (nucleophile) is an active-site residue. Arg-168 provides a ligand contact to NAD(+). D-glyceraldehyde 3-phosphate is bound at residue 194-195 (HG). Gln-301 contributes to the NAD(+) binding site.

It belongs to the glyceraldehyde-3-phosphate dehydrogenase family. In terms of assembly, homotetramer.

The protein localises to the cytoplasm. It carries out the reaction D-glyceraldehyde 3-phosphate + phosphate + NADP(+) = (2R)-3-phospho-glyceroyl phosphate + NADPH + H(+). The enzyme catalyses D-glyceraldehyde 3-phosphate + phosphate + NAD(+) = (2R)-3-phospho-glyceroyl phosphate + NADH + H(+). The protein operates within carbohydrate degradation; glycolysis; pyruvate from D-glyceraldehyde 3-phosphate: step 1/5. This Methanothermobacter thermautotrophicus (strain ATCC 29096 / DSM 1053 / JCM 10044 / NBRC 100330 / Delta H) (Methanobacterium thermoautotrophicum) protein is Glyceraldehyde-3-phosphate dehydrogenase (gap).